Reading from the N-terminus, the 351-residue chain is Snurportin-1 (351 aa).

2 disordered regions span residues 1–66 and 294–322; these read MESS…QKGI and EQKKKVNEQKEDPHTMEAEEDVESDEYDS. The segment covering 8–42 has biased composition (basic and acidic residues); it reads LYKKGLDIGEQQKQRQKELLKQQKLRRQQEQDDYR. Positions 52–62 are enriched in basic residues; the sequence is PRKKSGKRSGH. Residues 274-330 adopt a coiled-coil conformation; that stretch reads VLQYMDAFEQKLAEHRRTLKEQKKKVNEQKEDPHTMEAEEDVESDEYDSLKRVLDQQ. A compositionally biased stretch (basic and acidic residues) spans 294–310; it reads EQKKKVNEQKEDPHTME. Over residues 311 to 320 the composition is skewed to acidic residues; it reads AEEDVESDEY.

The protein belongs to the snurportin family. In terms of assembly, interacts with components of the snRNP complex including SmB and Smn; these interactions are RNA-dependent. Interacts with importin-7 msk but not with importin subunit beta Fs(2)Ket; the interaction is RNA-dependent.

The protein localises to the nucleus. The protein resides in the cytoplasm. It is found in the U-body. Its subcellular location is the nucleus speckle. It localises to the cajal body. Its function is as follows. Functions as an U snRNP-specific nuclear import adapter. Involved in the trimethylguanosine (m3G)-cap-dependent nuclear import of U snRNPs. Binds specifically to the terminal m3G-cap U snRNAs. This Drosophila melanogaster (Fruit fly) protein is Snurportin-1.